The sequence spans 467 residues: GTPase Der (467 aa).

2 EngA-type G domains span residues 25–188 (PVVA…PEAP) and 199–372 (RRVA…ASWE). GTP is bound by residues 31–38 (GRPNVGKS), 78–82 (DTGGW), 140–143 (NKAD), 205–212 (GRPNVGKS), 252–256 (DTAGL), and 317–320 (NKWD). The KH-like domain maps to 373–455 (TRVPTAQLNA…PIEISVRARK (83 aa)).

This sequence belongs to the TRAFAC class TrmE-Era-EngA-EngB-Septin-like GTPase superfamily. EngA (Der) GTPase family. In terms of assembly, associates with the 50S ribosomal subunit.

Functionally, GTPase that plays an essential role in the late steps of ribosome biogenesis. The chain is GTPase Der from Salinispora tropica (strain ATCC BAA-916 / DSM 44818 / JCM 13857 / NBRC 105044 / CNB-440).